Reading from the N-terminus, the 258-residue chain is Sugar fermentation stimulation protein homolog (258 aa).

The protein belongs to the SfsA family.

The polypeptide is Sugar fermentation stimulation protein homolog (Prochlorococcus marinus (strain NATL2A)).